A 188-amino-acid polypeptide reads, in one-letter code: Elongation factor P (188 aa).

The protein belongs to the elongation factor P family.

Its subcellular location is the cytoplasm. The protein operates within protein biosynthesis; polypeptide chain elongation. Functionally, involved in peptide bond synthesis. Stimulates efficient translation and peptide-bond synthesis on native or reconstituted 70S ribosomes in vitro. Probably functions indirectly by altering the affinity of the ribosome for aminoacyl-tRNA, thus increasing their reactivity as acceptors for peptidyl transferase. This Caulobacter vibrioides (strain ATCC 19089 / CIP 103742 / CB 15) (Caulobacter crescentus) protein is Elongation factor P.